The primary structure comprises 501 residues: MCGIVGIVGKSNVNQALYDALTVLQHRGQDAAGIVTCHDDKLYLRKDNGLVRDVFQQRHMQRLIGSVGIGHVRYPTAGSSSSAEAQPFYVNSPYGITLAHNGNLTNVEQLAKEIYESDLRHVNTNSDSEVLLNVFAHELAVRNKLQPTEEDIFAAVSCVHDRCVGGYAVVAMITGHGIVGFRDPNAIRPIVFGQRHTENGVEYMIASESVALDVLGFTLIRDLAPGEAVYITEEGKLYTRQCAKAPKYAPCIFEHVYLARPDSIMDGISVYKARLRMGEKLADKILRERPDHDIDVVIPIPDTSRTAALELANRLGVKFREGFVKNRYIGRTFIMPGQAARKKSVRQKLNAIELEFRGKNVMLVDDSIVRGTTCKQIIQMAREAGAKNVYFCSAAPAVRYPNVYGIDMPSAHELIAHNRSTEDVSKLIGADWLVYQDLPDLIDAVGGGKIKIDHFDCAVFDGEYVTGDVNEAYLNRIEQARNDATKAKSQAVSAIIDLYND.

The Nucleophile role is filled by C2. Residues 2–234 (CGIVGIVGKS…PGEAVYITEE (233 aa)) enclose the Glutamine amidotransferase type-2 domain. 3 residues coordinate Mg(2+): T303, D365, and D366.

This sequence in the C-terminal section; belongs to the purine/pyrimidine phosphoribosyltransferase family. Mg(2+) serves as cofactor.

The enzyme catalyses 5-phospho-beta-D-ribosylamine + L-glutamate + diphosphate = 5-phospho-alpha-D-ribose 1-diphosphate + L-glutamine + H2O. It functions in the pathway purine metabolism; IMP biosynthesis via de novo pathway; N(1)-(5-phospho-D-ribosyl)glycinamide from 5-phospho-alpha-D-ribose 1-diphosphate: step 1/2. In terms of biological role, catalyzes the formation of phosphoribosylamine from phosphoribosylpyrophosphate (PRPP) and glutamine. The polypeptide is Amidophosphoribosyltransferase (Pseudomonas aeruginosa (strain ATCC 15692 / DSM 22644 / CIP 104116 / JCM 14847 / LMG 12228 / 1C / PRS 101 / PAO1)).